Reading from the N-terminus, the 409-residue chain is Argininosuccinate synthase (409 aa).

ATP is bound by residues 15-23 and Ala-42; that span reads AYSGGLDTS. The L-citrulline site is built by Tyr-93 and Ser-98. Position 123 (Gly-123) interacts with ATP. Residues Thr-125, Asn-129, and Asp-130 each coordinate L-aspartate. L-citrulline is bound at residue Asn-129. Arg-133, Ser-182, Ser-191, Glu-267, and Tyr-279 together coordinate L-citrulline.

The protein belongs to the argininosuccinate synthase family. Type 1 subfamily. Homotetramer.

Its subcellular location is the cytoplasm. The enzyme catalyses L-citrulline + L-aspartate + ATP = 2-(N(omega)-L-arginino)succinate + AMP + diphosphate + H(+). The protein operates within amino-acid biosynthesis; L-arginine biosynthesis; L-arginine from L-ornithine and carbamoyl phosphate: step 2/3. This is Argininosuccinate synthase from Desulfitobacterium hafniense (strain Y51).